The following is a 677-amino-acid chain: Protein windpipe (677 aa).

The first 20 residues, 1–20 (MERVHLTAWLALFLIVVANA), serve as a signal peptide directing secretion. Residues 21-451 (TPTPARTPTG…IGKPKDDSSA (431 aa)) are Extracellular-facing. N-linked (GlcNAc...) asparagine glycosylation is found at asparagine 53 and asparagine 80. 4 LRR repeats span residues 91–116 (LPEL…GLKR), 118–133 (NLKH…RKLP), 134–156 (QHLQ…LTHM), and 158–183 (QLHQ…NWLV). 2 N-linked (GlcNAc...) asparagine glycosylation sites follow: asparagine 145 and asparagine 170. An LRRCT domain is found at 184–216 (ERIVYMEHPVVCSYPLEFRGRSWLQLKQDEICK). Disordered regions lie at residues 264–285 (AKKV…SGDL), 298–317 (TVAE…ASPS), and 325–385 (KDED…TVFS). Residues 347–372 (SKVKITSEDDIDSDGKPEESDVRPLE) show a composition bias toward basic and acidic residues. Polar residues predominate over residues 374–385 (PENSENPDTVFS). A helical transmembrane segment spans residues 452–472 (IYYLLAVIGLIVVGLVLFVAI). Over 473–677 (KRCKYDSNAA…EPTHQVINGH (205 aa)) the chain is Cytoplasmic. 2 disordered regions span residues 502–523 (LGKP…LIGE) and 539–677 (NGEA…INGH). A compositionally biased stretch (low complexity) spans 595-607 (AQQQQLAEQNNNE).

Interacts with dome; the interaction promotes internalization of dome and its subsequent lysosomal degradation. As to expression, in adult intestine, expressed in both small progenitor cells and large nuclei enterocytes (at protein level). During embryogenesis, restricted to the developing trachea.

The protein resides in the cell membrane. In terms of biological role, plays a role in negative regulation of the JAK/STAT pathway by binding to the receptor dome and promoting its internalization for subsequent lysosomal degradation, thereby reducing JAK/STAT signaling. The polypeptide is Protein windpipe (Drosophila melanogaster (Fruit fly)).